A 122-amino-acid polypeptide reads, in one-letter code: Large ribosomal subunit protein uL14 (122 aa).

The protein belongs to the universal ribosomal protein uL14 family. Part of the 50S ribosomal subunit. Forms a cluster with proteins L3 and L19. In the 70S ribosome, L14 and L19 interact and together make contacts with the 16S rRNA in bridges B5 and B8.

In terms of biological role, binds to 23S rRNA. Forms part of two intersubunit bridges in the 70S ribosome. This is Large ribosomal subunit protein uL14 from Campylobacter hominis (strain ATCC BAA-381 / DSM 21671 / CCUG 45161 / LMG 19568 / NCTC 13146 / CH001A).